The sequence spans 2843 residues: Adenomatous polyposis coli protein (2843 aa).

Position 2 is an N-acetylalanine (A2). A coiled-coil region spans residues A2–A61. A phosphoserine mark is found at S107 and S111. Positions S127–N248 form a coiled coil. Residues A239–T305 form a disordered region. The segment covering E241–N261 has biased composition (basic and acidic residues). Residues M271–T282 show a composition bias toward polar residues. Over residues S290–S299 the composition is skewed to low complexity. 7 ARM repeats span residues L453–I495, L505–V547, L548–A591, L592–I638, L639–T683, L684–A725, and L726–Q767. 3 positions are modified to phosphoserine: S744, S748, and S780. The tract at residues T828–L878 is disordered. A compositionally biased stretch (low complexity) spans S833–S843. Positions S844 to G857 are enriched in basic and acidic residues. The segment covering N869–L878 has biased composition (polar residues). Phosphoserine is present on S908. Disordered stretches follow at residues R923 to S943 and R958 to S987. Over residues A927 to S943 the composition is skewed to polar residues. The interval S960–L1337 is responsible for down-regulation through a process mediated by direct ubiquitination. A compositionally biased stretch (low complexity) spans N961–D971. Phosphoserine occurs at positions 987, 1038, and 1042. The segment at E1020 to E1169 is interaction with catenins. Disordered stretches follow at residues V1099 to E1169, S1190 to Q1244, and I1311 to Y1376. Polar residues predominate over residues A1107–C1130. Residues R1146 to P1159 are compositionally biased toward basic and acidic residues. A compositionally biased stretch (low complexity) spans S1190 to N1224. Residues A1225–Q1244 are compositionally biased toward polar residues. 2 stretches are compositionally biased toward low complexity: residues S1335–E1345 and S1355–A1366. S1360, S1371, S1385, S1392, and S1395 each carry phosphoserine. 5 disordered regions span residues S1403–A1475, P1526–D1569, M1583–Q1611, S1664–K1717, and N1729–G1836. A Phosphothreonine modification is found at T1438. Composition is skewed to basic and acidic residues over residues T1448–G1466 and E1540–L1564. At S1567 the chain carries Phosphoserine. Residues E1683 to D1698 are compositionally biased toward basic and acidic residues. Residues G1735–K1744 are compositionally biased toward basic residues. Position 1774 is a phosphoserine (S1774). Composition is skewed to basic and acidic residues over residues Y1785 to D1794 and V1804 to K1813. S1861, S1863, and S1864 each carry phosphoserine. Residues D1866 to K1893 form a highly charged region. Residues L1881–S1896 show a composition bias toward basic and acidic residues. 3 disordered regions span residues L1881–K1950, H1965–S2011, and I2043–L2072. 2 stretches are compositionally biased toward polar residues: residues H1897 to I1913 and Q1928 to K1938. Over residues D1939 to K1950 the composition is skewed to basic and acidic residues. Phosphoserine occurs at positions 1971 and 1973. A compositionally biased stretch (basic and acidic residues) spans N1979–E1991. The segment at E2035–D2059 is interaction with AXIN1. S2088, S2093, S2125, S2129, S2130, and S2132 each carry phosphoserine. 2 disordered regions span residues P2147–T2635 and N2667–R2714. T2151 is modified (phosphothreonine). The tract at residues I2167–S2674 is basic region. Basic and acidic residues predominate over residues K2169 to G2187. Composition is skewed to polar residues over residues V2203–S2223 and A2257–P2271. S2260, S2270, and S2283 each carry phosphoserine. Over residues A2286 to P2331 the composition is skewed to polar residues. The span at T2348–P2369 shows a compositional bias: low complexity. 2 stretches are compositionally biased toward polar residues: residues G2370 to G2409 and R2418 to S2427. Positions S2459–S2477 are enriched in low complexity. Phosphoserine occurs at positions 2473 and 2535. The interval T2475–V2843 is interaction with DLG1. Basic and acidic residues predominate over residues N2518–S2535. Residues S2555 to G2568 are compositionally biased toward polar residues. S2569 is modified (phosphoserine). Residues S2569 to E2579 are compositionally biased toward low complexity. Basic and acidic residues predominate over residues S2580–V2592. 3 stretches are compositionally biased toward polar residues: residues N2593–A2608, F2620–T2635, and N2668–T2679. Residues S2671 and S2674 each carry the phosphoserine modification. The tract at residues S2674–V2843 is interaction with MAPRE1. T2679 bears the Phosphothreonine mark. 2 positions are modified to phosphoserine: S2710 and S2724. The disordered stretch occupies residues D2729–V2843. The segment covering G2741–V2757 has biased composition (polar residues). Residues S2763–S2774 are compositionally biased toward low complexity. Polar residues predominate over residues F2784–N2812. S2789 carries the post-translational modification Phosphoserine. Residues S2803–P2806 carry the Microtubule tip localization signal motif. Positions T2841–V2843 match the PDZ-binding motif.

Belongs to the adenomatous polyposis coli (APC) family. As to quaternary structure, forms homooligomers. Found in a complex consisting of ARHGEF4, APC and CTNNB1. Found in a complex composed of MACF1, APC, AXIN1, CTNNB1 and GSK3B. The complex composed, at least, of APC, CTNNB1 and GSK3B interacts with JPT1; the interaction requires the inactive form of GSK3B (phosphorylated at 'Ser-9'). Interacts with APC2. Interacts with DLG1 (via PDZ domains) and DLG3 (via PDZ domains). Interacts with alpha- and beta-catenins. Interacts with AXIN1 (via RGS domain). Interacts with ARHGEF4 (via N-terminus). Interacts (via C-terminal residues 2674-2843) with MAPRE1 (via C-terminal residues 206-211); the interaction inhibits association with and bundling of F-actin. Interacts with MAPRE2 and MAPRE3 (via C-terminus). Interacts with DIAPH1; DIAPH1 acts as a scaffold protein for MAPRE1 and APC to stabilize microtubules and promote cell migration. Interacts with DIAPH2. Interacts with SCRIB; may mediate APC targeting to adherens junctions of epithelial cells. Interacts with SPATA13 (via N-terminus and SH3 domain). Interacts with ASAP1 (via SH3 domain). Interacts (at the cell membrane) with AMER1 and AMER2 (via ARM repeats). Interacts with KHDRBS1. Interacts with actin; binds both to F-actin and actin filament bundles. Phosphorylated; phosphorylation enhances the F-actin bundling activity. Phosphorylated by GSK3B. Post-translationally, ubiquitinated, leading to its degradation by the proteasome. Ubiquitination is facilitated by Axin. Deubiquitinated by ZRANB1/TRABID. In terms of tissue distribution, expressed in a variety of tissues: brain, small intestine, colon, thymus, skeletal muscle, heart, prostate, lung, spleen, ovary, testis kidney, placenta, blood and liver. Isoform 1A: Very strongly expressed in brain but has relatively low expression levels in other tissues. Isoform 1B: Predominant form in all tissues except for brain, including gastric mucosa and blood.

Its subcellular location is the cell junction. The protein localises to the adherens junction. It localises to the cytoplasm. It is found in the cytoskeleton. The protein resides in the cell projection. Its subcellular location is the lamellipodium. The protein localises to the ruffle membrane. It localises to the cell membrane. In terms of biological role, tumor suppressor. Promotes rapid degradation of CTNNB1 and participates in Wnt signaling as a negative regulator. APC activity is correlated with its phosphorylation state. Activates the GEF activity of SPATA13 and ARHGEF4. Plays a role in hepatocyte growth factor (HGF)-induced cell migration. Required for MMP9 up-regulation via the JNK signaling pathway in colorectal tumor cells. Associates with both microtubules and actin filaments, components of the cytoskeleton. Plays a role in mediating the organization of F-actin into ordered bundles. Functions downstream of Rho GTPases and DIAPH1 to selectively stabilize microtubules. Acts as a mediator of ERBB2-dependent stabilization of microtubules at the cell cortex. It is required for the localization of MACF1 to the cell membrane and this localization of MACF1 is critical for its function in microtubule stabilization. This chain is Adenomatous polyposis coli protein, found in Homo sapiens (Human).